Here is a 283-residue protein sequence, read N- to C-terminus: Probable endonuclease 4 (283 aa).

Zn(2+) is bound by residues histidine 67, histidine 107, glutamate 144, aspartate 178, histidine 181, histidine 215, aspartate 228, histidine 230, and glutamate 260.

It belongs to the AP endonuclease 2 family. It depends on Zn(2+) as a cofactor.

It carries out the reaction Endonucleolytic cleavage to 5'-phosphooligonucleotide end-products.. Functionally, endonuclease IV plays a role in DNA repair. It cleaves phosphodiester bonds at apurinic or apyrimidinic (AP) sites, generating a 3'-hydroxyl group and a 5'-terminal sugar phosphate. This is Probable endonuclease 4 from Citrifermentans bemidjiense (strain ATCC BAA-1014 / DSM 16622 / JCM 12645 / Bem) (Geobacter bemidjiensis).